The chain runs to 86 residues: Co-chaperonin GroES (86 aa).

This sequence belongs to the GroES chaperonin family. As to quaternary structure, heptamer of 7 subunits arranged in a ring. Interacts with the chaperonin GroEL.

It localises to the cytoplasm. Together with the chaperonin GroEL, plays an essential role in assisting protein folding. The GroEL-GroES system forms a nano-cage that allows encapsulation of the non-native substrate proteins and provides a physical environment optimized to promote and accelerate protein folding. GroES binds to the apical surface of the GroEL ring, thereby capping the opening of the GroEL channel. In Campylobacter lari (strain RM2100 / D67 / ATCC BAA-1060), this protein is Co-chaperonin GroES.